The sequence spans 418 residues: FAD-dependent monooxygenase fmqB (418 aa).

FAD contacts are provided by Val12 and Arg68. The active site involves Arg147. Positions 272 and 285 each coordinate FAD.

The protein belongs to the paxM FAD-dependent monooxygenase family.

It localises to the cytoplasm. It functions in the pathway alkaloid biosynthesis. Functionally, FAD-dependent monooxygenase; part of the gene cluster that mediates the biosynthesis of the antitumor fumiquinazolines that confer a dual-usage capability to defend against phagocytes in the environment and animal hosts. The simplest member is fumiquinazoline F (FQF) with a 6-6-6 tricyclic core derived from anthranilic acid (Ant), tryptophan (Trp), and alanine (Ala). The trimodular NRPS fmqA is responsible for FQF formation. Modules 1, 2 and 3 of fmqA are predicted to activate and load Ant, Trp and Ala, respectively, providing for the assembly of an Ant-Trp-Ala-S-enzyme intermediate that would undergo double cyclization for chain release and generation of the tricyclic 6-6-6 product fumiquinazoline F. The presence of an E domain predicted for module 2 of fmqA is consistent with epimerization of L-Trp to D-Trp during assembly to generate the R-stereocenter at C14 of FQF. The FAD-dependent monooxygenase fmqB and the monomodular NRPS fmqC then maturate FQF to FQA. FmqB oxidizes the 2',3'-double bond of the indole side chain of FQF, and fmqC activates L-Ala as the adenylate, installs it as the pantetheinyl thioester on its carrier protein domain, and acylates the oxidized indole for subsequent intramolecular cyclization to create the 6-5-5-imidazolindolone of FQA. The FAD-linked oxidoreductase fmqD introduces a third layer of scaffold complexity by converting FQA to the spirohemiaminal FQC, presumably by catalyzing the formation of a transient imine within the pyrazinone ring. FQC subsequently converts nonenzymatically to the known cyclic aminal FQD. The chain is FAD-dependent monooxygenase fmqB from Aspergillus fumigatus (strain ATCC MYA-4609 / CBS 101355 / FGSC A1100 / Af293) (Neosartorya fumigata).